Reading from the N-terminus, the 647-residue chain is Exoribonuclease 2 (647 aa).

Residues 192 to 520 (REDLTALSFV…NHRLLKAIIS (329 aa)) form the RNB domain. The S1 motif domain occupies 565 to 647 (ESTFNAEIID…ETRNIVARPI (83 aa)).

It belongs to the RNR ribonuclease family. RNase II subfamily.

The protein localises to the cytoplasm. The enzyme catalyses Exonucleolytic cleavage in the 3'- to 5'-direction to yield nucleoside 5'-phosphates.. In terms of biological role, involved in mRNA degradation. Hydrolyzes single-stranded polyribonucleotides processively in the 3' to 5' direction. This Proteus mirabilis (strain HI4320) protein is Exoribonuclease 2.